A 193-amino-acid chain; its full sequence is Potassium-transporting ATPase KdpC subunit (193 aa).

A helical transmembrane segment spans residues 7 to 27 (PLVVLFVVLNAVTGLAYPAVM).

It belongs to the KdpC family. As to quaternary structure, the system is composed of three essential subunits: KdpA, KdpB and KdpC.

Its subcellular location is the cell inner membrane. In terms of biological role, part of the high-affinity ATP-driven potassium transport (or Kdp) system, which catalyzes the hydrolysis of ATP coupled with the electrogenic transport of potassium into the cytoplasm. This subunit acts as a catalytic chaperone that increases the ATP-binding affinity of the ATP-hydrolyzing subunit KdpB by the formation of a transient KdpB/KdpC/ATP ternary complex. This Burkholderia cenocepacia (strain HI2424) protein is Potassium-transporting ATPase KdpC subunit.